Consider the following 388-residue polypeptide: MNRRLVILVADSAGCGALPDAAAYGDAGSDTLGNTSRAVGGLSLPVLGAMGLGHVTAIQGVPPDPAPTAFHGRMAERSEGKDTTTGHWEMMGVVLRQGLRTFPGGFPPEIVEAFVRETGAPGVLGNTVASGTVIIQELGEEHQRTGKPIVYTSADSVFQVAAHTDTVPLETLYAWCRTARRILDPWRVARVIARPFVGTPGKYARTYDRKDFSMPPPATTVLERLVEAGVPVVGVGKIPDIFDRRGITEEIHTAGNADGLARTAALLDRVDRGLVFVNLVDFDMLYGHRNDPAGYARALEELDRALPAILDRLGPGDLLALTADHGCDPTTPSTDHSREHVPLLVHAPGRGGGDLGTRTTFADLGATVAEYFGVRSDVGTSFLAEVTR.

Mn(2+) is bound by residues Asp-11, Asp-283, His-288, Asp-324, His-325, and His-336.

It belongs to the phosphopentomutase family. It depends on Mn(2+) as a cofactor.

It localises to the cytoplasm. It catalyses the reaction 2-deoxy-alpha-D-ribose 1-phosphate = 2-deoxy-D-ribose 5-phosphate. It carries out the reaction alpha-D-ribose 1-phosphate = D-ribose 5-phosphate. It participates in carbohydrate degradation; 2-deoxy-D-ribose 1-phosphate degradation; D-glyceraldehyde 3-phosphate and acetaldehyde from 2-deoxy-alpha-D-ribose 1-phosphate: step 1/2. Isomerase that catalyzes the conversion of deoxy-ribose 1-phosphate (dRib-1-P) and ribose 1-phosphate (Rib-1-P) to deoxy-ribose 5-phosphate (dRib-5-P) and ribose 5-phosphate (Rib-5-P), respectively. This chain is Phosphopentomutase, found in Anaeromyxobacter dehalogenans (strain 2CP-1 / ATCC BAA-258).